Consider the following 212-residue polypeptide: Stem bromelain (212 aa).

Cystine bridges form between cysteine 23–cysteine 63 and cysteine 57–cysteine 96. Residue cysteine 26 is part of the active site. N-linked (GlcNAc...) asparagine glycosylation is present at asparagine 117. Cysteine 152 and cysteine 199 are oxidised to a cystine. The active site involves histidine 158.

The protein belongs to the peptidase C1 family.

The catalysed reaction is Broad specificity for cleavage of proteins, but strong preference for Z-Arg-Arg-|-NHMec among small molecule substrates.. Its function is as follows. Cysteine proteinase with a high level of diversity in substrate specificity. In Ananas comosus (Pineapple), this protein is Stem bromelain.